A 199-amino-acid chain; its full sequence is Recombination protein RecR (199 aa).

The C4-type zinc finger occupies 58 to 73; sequence CKKCFNFTSEDECEIC. The Toprim domain occupies 81–175; that stretch reads KLICVVAETK…KVTRIAYGLP (95 aa).

This sequence belongs to the RecR family.

Functionally, may play a role in DNA repair. It seems to be involved in an RecBC-independent recombinational process of DNA repair. It may act with RecF and RecO. This chain is Recombination protein RecR, found in Prochlorococcus marinus (strain MIT 9312).